A 592-amino-acid polypeptide reads, in one-letter code: Guanylate-binding protein 1 (592 aa).

Positions 1-311 (MASEIHMTGP…NAISSGDLPC (311 aa)) are GTPase domain (Globular). In terms of domain architecture, GB1/RHD3-type G spans 35–278 (TQPMVVVAIV…FCSYIFSNSK (244 aa)). GTP is bound by residues 45-52 (GLYRTGKS), 67-69 (LGS), and 97-101 (DTEGL). Residue serine 156 is modified to Phosphoserine. The residue at position 589 (cysteine 589) is a Cysteine methyl ester. Residue cysteine 589 is the site of S-farnesyl cysteine attachment. Phosphothreonine is present on threonine 590. The propeptide at 590–592 (TIS) is removed in mature form.

The protein belongs to the TRAFAC class dynamin-like GTPase superfamily. GB1/RHD3 GTPase family. GB1 subfamily. In terms of assembly, homodimer; homodimerization occurs upon GTP-binding and is required for the second hydrolysis step from GDP to GMP. Undergoes conformational changes and oligomerization upon GTP-binding and hydrolysis. Heterodimer with other family members, including GBP2, GBP3, GBP4 and GBP5. Dimerization regulates subcellular location to membranous structures. Interacts with SQSTM1. Interacts (when phosphorylated) with 14-3-3 protein sigma (SFN); leading to GBP1 retention in the cytosol and inactivation. Post-translationally, isoprenylation is required for proper subcellular location. Phosphorylated at Ser-156 by PIM1 in absence of infection, inhibits GBP1: phosphorylation promotes interaction with 14-3-3 protein sigma (SFN), leading to GBP1 retention in the cytosol. Dephosphorylated in response to infection, liberating GBP1.

The protein localises to the cytoplasmic vesicle membrane. Its subcellular location is the golgi apparatus membrane. The protein resides in the cell membrane. It localises to the cytoplasm. It is found in the cytosol. The protein localises to the secreted. The enzyme catalyses GTP + H2O = GDP + phosphate + H(+). It catalyses the reaction GDP + H2O = GMP + phosphate + H(+). In terms of biological role, interferon (IFN)-inducible GTPase that plays important roles in innate immunity against a diverse range of bacterial, viral and protozoan pathogens. Hydrolyzes GTP to GMP in two consecutive cleavage reactions: GTP is first hydrolyzed to GDP and then to GMP in a processive manner. Following infection, recruited to the pathogen-containing vacuoles or vacuole-escaped bacteria and promotes both inflammasome assembly and autophagy. Acts as a positive regulator of inflammasome assembly by facilitating the detection of inflammasome ligands from pathogens. Involved in the lysis of pathogen-containing vacuoles, releasing pathogens into the cytosol. Following pathogen release in the cytosol, forms a protein coat in a GTPase-dependent manner that encapsulates pathogens and promotes the detection of ligands by pattern recognition receptors. Plays a key role in inflammasome assembly in response to infection by Gram-negative bacteria: following pathogen release in the cytosol, forms a protein coat that encapsulates Gram-negative bacteria and directly binds to lipopolysaccharide (LPS), disrupting the O-antigen barrier and unmasking lipid A that is that detected by the non-canonical inflammasome effector CASP4/CASP11. Also promotes recruitment of proteins that mediate bacterial cytolysis, leading to release double-stranded DNA (dsDNA) that activates the AIM2 inflammasome. Involved in autophagy by regulating bacteriolytic peptide generation via its interaction with ubiquitin-binding protein SQSTM1, which delivers monoubiquitinated proteins to autolysosomes for the generation of bacteriolytic peptides. Confers protection to several pathogens, including the bacterial pathogens L.monocytogenes and M.bovis BCG as well as the protozoan pathogen T.gondii. Exhibits antiviral activity against influenza virus. The chain is Guanylate-binding protein 1 (GBP1) from Pongo abelii (Sumatran orangutan).